Reading from the N-terminus, the 198-residue chain is Probable GTP-binding protein EngB (198 aa).

Positions 21–195 (NFSEVAFLGR…EDIIINQTLG (175 aa)) constitute an EngB-type G domain. Residues 29-36 (GRSNVGKS), 56-60 (GKTQL), 81-84 (DLPG), 151-154 (TKCD), and 174-176 (VSN) contribute to the GTP site. Mg(2+) is bound by residues serine 36 and threonine 58.

The protein belongs to the TRAFAC class TrmE-Era-EngA-EngB-Septin-like GTPase superfamily. EngB GTPase family. Mg(2+) is required as a cofactor.

In terms of biological role, necessary for normal cell division and for the maintenance of normal septation. This is Probable GTP-binding protein EngB from Campylobacter jejuni subsp. jejuni serotype O:23/36 (strain 81-176).